An 892-amino-acid chain; its full sequence is Alanine--tRNA ligase (892 aa).

Residues His-574, His-578, Cys-676, and His-680 each coordinate Zn(2+).

This sequence belongs to the class-II aminoacyl-tRNA synthetase family. Zn(2+) serves as cofactor.

It is found in the cytoplasm. The catalysed reaction is tRNA(Ala) + L-alanine + ATP = L-alanyl-tRNA(Ala) + AMP + diphosphate. Functionally, catalyzes the attachment of alanine to tRNA(Ala) in a two-step reaction: alanine is first activated by ATP to form Ala-AMP and then transferred to the acceptor end of tRNA(Ala). Also edits incorrectly charged Ser-tRNA(Ala) and Gly-tRNA(Ala) via its editing domain. This chain is Alanine--tRNA ligase, found in Prochlorococcus marinus (strain SARG / CCMP1375 / SS120).